Reading from the N-terminus, the 303-residue chain is Glycine--tRNA ligase alpha subunit (303 aa).

The protein belongs to the class-II aminoacyl-tRNA synthetase family. In terms of assembly, tetramer of two alpha and two beta subunits.

It is found in the cytoplasm. It carries out the reaction tRNA(Gly) + glycine + ATP = glycyl-tRNA(Gly) + AMP + diphosphate. The sequence is that of Glycine--tRNA ligase alpha subunit from Methylobacterium radiotolerans (strain ATCC 27329 / DSM 1819 / JCM 2831 / NBRC 15690 / NCIMB 10815 / 0-1).